Reading from the N-terminus, the 504-residue chain is Sodium-coupled neutral amino acid symporter 2 (504 aa).

The disordered stretch occupies residues Met-1 to Ser-22. At Met-1 to Ser-76 the chain is on the cytoplasmic side. The segment at Met-1–Met-96 is regulates protein turnover upon amino acid deprivation. A phosphoserine mark is found at Ser-12, Ser-21, Ser-22, and Ser-55. The chain crosses the membrane as a helical span at residues Val-77 to Met-96. Na(+) is bound at residue Asn-82. Residues Ala-97–Ala-102 are Extracellular-facing. The chain crosses the membrane as a helical span at residues Leu-103 to Leu-123. Residues Lys-124–Asn-158 are Cytoplasmic-facing. A helical membrane pass occupies residues Ile-159–Ile-177. The Extracellular portion of the chain corresponds to Lys-178–Gly-188. Residues Leu-189 to Leu-209 form a helical membrane-spanning segment. Residues Ser-210–Tyr-217 are Cytoplasmic-facing. Residues Leu-218–Cys-238 form a helical membrane-spanning segment. The Extracellular segment spans residues Lys-239–Thr-290. Cysteines 245 and 279 form a disulfide. Asn-254, Asn-258, and Asn-272 each carry an N-linked (GlcNAc...) asparagine glycan. The chain crosses the membrane as a helical span at residues Val-291 to Tyr-311. At Glu-312–Lys-327 the chain is on the cytoplasmic side. A helical transmembrane segment spans residues Ile-328–Phe-348. At Tyr-349–Leu-369 the chain is on the extracellular side. A helical membrane pass occupies residues Leu-370–Phe-390. Thr-384 is a binding site for Na(+). Topologically, residues Pro-391–His-411 are cytoplasmic. A helical membrane pass occupies residues Ser-412–Ile-432. The Extracellular portion of the chain corresponds to Arg-433 to Asp-434. Residues Ile-435–Phe-455 traverse the membrane as a helical segment. Topologically, residues Tyr-456–Lys-470 are cytoplasmic. A helical membrane pass occupies residues Ile-471–Leu-493. The Extracellular portion of the chain corresponds to Asp-494–His-504.

This sequence belongs to the amino acid/polyamine transporter 2 family. Post-translationally, polyubiquitination by NEDD4L regulates the degradation and the activity of SLC38A2. As to expression, widely expressed. Expressed in skeletal muscle and adipose tissue (at protein level). Expressed by glutamatergic and GABAergic neurons together with astrocytes and other non-neuronal cells in the cerebral cortex (at protein level). Widely expressed in the central nervous systeme where, it is enriched in the spinal cord and the brainstem nuclei, especially those of the auditory system.

The protein resides in the cell membrane. It carries out the reaction L-alanine(in) + Na(+)(in) = L-alanine(out) + Na(+)(out). The catalysed reaction is glycine(in) + Na(+)(in) = glycine(out) + Na(+)(out). It catalyses the reaction L-serine(in) + Na(+)(in) = L-serine(out) + Na(+)(out). The enzyme catalyses L-proline(in) + Na(+)(in) = L-proline(out) + Na(+)(out). It carries out the reaction L-methionine(in) + Na(+)(in) = L-methionine(out) + Na(+)(out). The catalysed reaction is L-histidine(in) + Na(+)(in) = L-histidine(out) + Na(+)(out). It catalyses the reaction L-asparagine(in) + Na(+)(in) = L-asparagine(out) + Na(+)(out). The enzyme catalyses L-glutamine(in) + Na(+)(in) = L-glutamine(out) + Na(+)(out). It carries out the reaction L-threonine(in) + Na(+)(in) = L-threonine(out) + Na(+)(out). The catalysed reaction is L-leucine(in) + Na(+)(in) = L-leucine(out) + Na(+)(out). It catalyses the reaction L-phenylalanine(in) + Na(+)(in) = L-phenylalanine(out) + Na(+)(out). Inhibited by N-methyl-D-glucamine. Inhibited by choline. Allosteric regulation of sodium ions binding by pH. Functionally, symporter that cotransports neutral amino acids and sodium ions from the extracellular to the intracellular side of the cell membrane. The transport is pH-sensitive, Li(+)-intolerant, electrogenic, driven by the Na(+) electrochemical gradient and cotransports of neutral amino acids and sodium ions with a stoichiometry of 1:1. May function in the transport of amino acids at the blood-brain barrier. May function in the transport of amino acids in the supply of maternal nutrients to the fetus through the placenta. Maintains a key metabolic glutamine/glutamate balance underpinning retrograde signaling by dendritic release of the neurotransmitter glutamate. Transports L-proline in differentiating osteoblasts for the efficient synthesis of proline-enriched proteins and provides proline essential for osteoblast differentiation and bone formation during bone development. The polypeptide is Sodium-coupled neutral amino acid symporter 2 (Rattus norvegicus (Rat)).